The primary structure comprises 478 residues: Pyruvate kinase (478 aa).

Arg-36 contributes to the substrate binding site. K(+)-binding residues include Asn-38, Ser-40, and Asp-70. Position 38-41 (38-41) interacts with ATP; that stretch reads NFSH. Positions 77 and 160 each coordinate ATP. Glu-225 serves as a coordination point for Mg(2+). Gly-251, Asp-252, and Thr-284 together coordinate substrate. Asp-252 contacts Mg(2+).

It belongs to the pyruvate kinase family. As to quaternary structure, homotetramer. Mg(2+) is required as a cofactor. Requires K(+) as cofactor.

The catalysed reaction is pyruvate + ATP = phosphoenolpyruvate + ADP + H(+). It functions in the pathway carbohydrate degradation; glycolysis; pyruvate from D-glyceraldehyde 3-phosphate: step 5/5. Its activity is regulated as follows. Allosterically activated by AMP and by several sugar phosphates. Belongs to type II PK. This is Pyruvate kinase (pykA) from Haemophilus influenzae (strain ATCC 51907 / DSM 11121 / KW20 / Rd).